Reading from the N-terminus, the 131-residue chain is Fluoride-specific ion channel FluC 1 (131 aa).

4 helical membrane-spanning segments follow: residues 4 to 24 (LALPAWQASLVAIGAVPGAWL), 40 to 60 (HWGTFAVNMVAAFALGLVLAL), 73 to 93 (LILLIGVGFFGSLSTFSTFAV), and 108 to 128 (LVLAVGSILGGLLAVAAGVGL). 2 residues coordinate Na(+): Gly83 and Ser86.

It belongs to the fluoride channel Fluc/FEX (TC 1.A.43) family.

Its subcellular location is the cell inner membrane. It catalyses the reaction fluoride(in) = fluoride(out). Its activity is regulated as follows. Na(+) is not transported, but it plays an essential structural role and its presence is essential for fluoride channel function. In terms of biological role, fluoride-specific ion channel. Important for reducing fluoride concentration in the cell, thus reducing its toxicity. This chain is Fluoride-specific ion channel FluC 1, found in Prochlorococcus marinus (strain MIT 9313).